The chain runs to 126 residues: C-type natriuretic peptide 1 (126 aa).

The N-terminal stretch at 1–22 is a signal peptide; the sequence is MLCPALLCAALLLLTPVEITDA. Positions 23–104 are excised as a propeptide; sequence RALQQPSDAA…KRAEPDRSRR (82 aa). Cys110 and Cys126 are disulfide-bonded.

Belongs to the natriuretic peptide family.

It is found in the secreted. Exhibits natriuretic and vasodepressant activity. Has cGMP-stimulating activity. May help to regulate body fluid homeostasis in a variety of aquatic environments. In Takifugu rubripes (Japanese pufferfish), this protein is C-type natriuretic peptide 1.